A 205-amino-acid chain; its full sequence is Cytochrome c biogenesis ATP-binding export protein CcmA (205 aa).

In terms of domain architecture, ABC transporter spans 2–204; the sequence is LEVSNLTAIR…SPKLRKIKLG (203 aa). 34–41 serves as a coordination point for ATP; that stretch reads GRNGTGKT.

The protein belongs to the ABC transporter superfamily. CcmA exporter (TC 3.A.1.107) family. In terms of assembly, the complex is composed of two ATP-binding proteins (CcmA) and two transmembrane proteins (CcmB).

The protein resides in the cell inner membrane. It catalyses the reaction heme b(in) + ATP + H2O = heme b(out) + ADP + phosphate + H(+). Part of the ABC transporter complex CcmAB involved in the biogenesis of c-type cytochromes; once thought to export heme, this seems not to be the case, but its exact role is uncertain. Responsible for energy coupling to the transport system. The protein is Cytochrome c biogenesis ATP-binding export protein CcmA of Vibrio vulnificus (strain YJ016).